Here is a 155-residue protein sequence, read N- to C-terminus: Xanthine-guanine phosphoribosyltransferase (155 aa).

5-phospho-alpha-D-ribose 1-diphosphate-binding positions include 37–38 and 91–99; these read RG and DDLVDTGNT. Aspartate 92 contacts Mg(2+). 2 residues coordinate guanine: aspartate 95 and isoleucine 138. Residues aspartate 95 and isoleucine 138 each coordinate xanthine. GMP-binding positions include 95–99 and 137–138; these read DTGNT and WI.

The protein belongs to the purine/pyrimidine phosphoribosyltransferase family. XGPT subfamily. In terms of assembly, homotetramer. Requires Mg(2+) as cofactor.

It is found in the cell inner membrane. The catalysed reaction is GMP + diphosphate = guanine + 5-phospho-alpha-D-ribose 1-diphosphate. The enzyme catalyses XMP + diphosphate = xanthine + 5-phospho-alpha-D-ribose 1-diphosphate. It catalyses the reaction IMP + diphosphate = hypoxanthine + 5-phospho-alpha-D-ribose 1-diphosphate. It functions in the pathway purine metabolism; GMP biosynthesis via salvage pathway; GMP from guanine: step 1/1. It participates in purine metabolism; XMP biosynthesis via salvage pathway; XMP from xanthine: step 1/1. Functionally, acts on guanine, xanthine and to a lesser extent hypoxanthine. Its function is as follows. Purine salvage pathway enzyme that catalyzes the transfer of the ribosyl-5-phosphate group from 5-phospho-alpha-D-ribose 1-diphosphate (PRPP) to the N9 position of the 6-oxopurines guanine and xanthine to form the corresponding ribonucleotides GMP (guanosine 5'-monophosphate) and XMP (xanthosine 5'-monophosphate), with the release of PPi. To a lesser extent, also acts on hypoxanthine. This is Xanthine-guanine phosphoribosyltransferase from Haemophilus influenzae (strain ATCC 51907 / DSM 11121 / KW20 / Rd).